The primary structure comprises 232 residues: Ornithine carbamoyltransferase (232 aa).

Residues Gln-15, Arg-39, and 66–69 (HPTQ) contribute to the carbamoyl phosphate site. L-ornithine contacts are provided by residues Asn-99, Asp-163, and 167-168 (SM). Residues 204–207 (HCLP) and Thr-232 contribute to the carbamoyl phosphate site.

This sequence belongs to the aspartate/ornithine carbamoyltransferase superfamily. OTCase family.

Its subcellular location is the cytoplasm. The catalysed reaction is carbamoyl phosphate + L-ornithine = L-citrulline + phosphate + H(+). Its pathway is amino-acid biosynthesis; L-arginine biosynthesis; L-arginine from L-ornithine and carbamoyl phosphate: step 1/3. Functionally, reversibly catalyzes the transfer of the carbamoyl group from carbamoyl phosphate (CP) to the N(epsilon) atom of ornithine (ORN) to produce L-citrulline. This chain is Ornithine carbamoyltransferase (argF), found in Neisseria sicca.